The primary structure comprises 688 residues: Sciellin (688 aa).

Residues 1–25 (MSNVTLRKMSPTGNEMKSTTQGTTR) show a composition bias toward polar residues. Residues 1-29 (MSNVTLRKMSPTGNEMKSTTQGTTRKQQD) are disordered. Lys83 is subject to N6-acetyllysine. The interval 134-231 (QPGGSLNANT…TNRSAERNIR (98 aa)) is disordered. Residues 140–154 (NANTSNTIASTSATT) show a composition bias toward low complexity. Residues 186 to 195 (VHPPIPPKPS) show a composition bias toward pro residues. 16 tandem repeats follow at residues 251 to 266 (GEEL…SLNR), 267 to 286 (NQGL…REKR), 287 to 306 (AKSL…DGKG), 307 to 326 (IQSL…NEKG), 327 to 346 (RQNL…TSRR), 347 to 366 (SEDL…NTTG), 367 to 386 (KKDL…NITR), 387 to 406 (GQSL…SNQG), 407 to 426 (SKDL…STEG), 427 to 446 (GQSL…TNQG), 447 to 465 (NQDL…KSSE), 466 to 484 (QGLD…NTDG), 485 to 504 (KQDL…NNQR), 505 to 523 (NQDL…RNNQ), 524 to 543 (SQDL…NTNR), and 544 to 563 (DQNL…NKNG). The segment at 251-563 (GEELDNLIKM…NSHVSENKNG (313 aa)) is 16 X approximate tandem repeats. Ser289 bears the Phosphoserine mark. Residues 340 to 373 (MNKTSRRSEDLDNATEVNPKGHENTTGKKDLDGL) are disordered. The segment covering 358–373 (PKGHENTTGKKDLDGL) has biased composition (basic and acidic residues). Position 389 is a phosphoserine (Ser389). Positions 619 to 685 (DMCTYCRKPL…EPCYSKIMAK (67 aa)) constitute an LIM zinc-binding domain.

As to expression, highly expressed in esophagus. It is also expressed in keratinocytes, amniotic tissue, foreskin stratum spinosum and stratum granulosum, hair follicle and nail.

The protein resides in the cytoplasm. It is found in the membrane. In terms of biological role, may function in the assembly or regulation of proteins in the cornified envelope. The LIM domain may be involved in homotypic or heterotypic associations and may function to localize sciellin to the cornified envelope. The protein is Sciellin (SCEL) of Homo sapiens (Human).